A 768-amino-acid chain; its full sequence is Cullin-3-B (768 aa).

The segment at 677–698 is disordered; it reads VAAKQGESDPERKETRQKVDDD. Positions 682-698 are enriched in basic and acidic residues; that stretch reads GESDPERKETRQKVDDD. The 63-residue stretch at 698 to 760 folds into the Cullin neddylation domain; the sequence is DRKHEIEAAI…REYLARTPED (63 aa). Lysine 712 participates in a covalent cross-link: Glycyl lysine isopeptide (Lys-Gly) (interchain with G-Cter in NEDD8).

It belongs to the cullin family. Component of multiple BCR (BTB-CUL3-RBX1) E3 ubiquitin-protein ligase complexes formed of cul3, rbx1 and a variable BTB domain-containing protein acting as both, adapter to cullin and substrate recognition subunit. Interacts with btbd6. In terms of processing, neddylated. Attachment of NEDD8 is required for the E3 ubiquitin-protein ligase activity of the SCF-like complex.

It is found in the nucleus. The protein operates within protein modification; protein ubiquitination. In terms of biological role, probable core component of cullin-based SCF-like E3 ubiquitin-protein ligase complexes which mediate the ubiquitination and subsequent proteasomal degradation of target proteins. The E3 ubiquitin-protein ligase activity of the complex is dependent on the neddylation of the cullin subunit. Involved in ER-Golgi transport by regulating the size of COPII coats, thereby playing a key role in collagen export, which is required for embryonic stem (ES) cells division. May play a role in the regulation of mittotic entry via ubiquitination of aurka. The chain is Cullin-3-B (cul3b) from Xenopus laevis (African clawed frog).